A 124-amino-acid polypeptide reads, in one-letter code: Large ribosomal subunit protein bL12 (124 aa).

It belongs to the bacterial ribosomal protein bL12 family. In terms of assembly, homodimer. Part of the ribosomal stalk of the 50S ribosomal subunit. Forms a multimeric L10(L12)X complex, where L10 forms an elongated spine to which 2 to 4 L12 dimers bind in a sequential fashion. Binds GTP-bound translation factors.

Forms part of the ribosomal stalk which helps the ribosome interact with GTP-bound translation factors. Is thus essential for accurate translation. This chain is Large ribosomal subunit protein bL12, found in Christiangramia forsetii (strain DSM 17595 / CGMCC 1.15422 / KT0803) (Gramella forsetii).